The primary structure comprises 413 residues: Cell division protein FtsA (413 aa).

It belongs to the FtsA/MreB family. Self-interacts. Interacts with FtsZ.

The protein resides in the cell inner membrane. Its function is as follows. Cell division protein that is involved in the assembly of the Z ring. May serve as a membrane anchor for the Z ring. This Borreliella burgdorferi (strain ATCC 35210 / DSM 4680 / CIP 102532 / B31) (Borrelia burgdorferi) protein is Cell division protein FtsA.